Here is a 348-residue protein sequence, read N- to C-terminus: Phospho-2-dehydro-3-deoxyheptonate aldolase, Trp-sensitive (348 aa).

This sequence belongs to the class-I DAHP synthase family.

The catalysed reaction is D-erythrose 4-phosphate + phosphoenolpyruvate + H2O = 7-phospho-2-dehydro-3-deoxy-D-arabino-heptonate + phosphate. It functions in the pathway metabolic intermediate biosynthesis; chorismate biosynthesis; chorismate from D-erythrose 4-phosphate and phosphoenolpyruvate: step 1/7. In terms of biological role, stereospecific condensation of phosphoenolpyruvate (PEP) and D-erythrose-4-phosphate (E4P) giving rise to 3-deoxy-D-arabino-heptulosonate-7-phosphate (DAHP). The polypeptide is Phospho-2-dehydro-3-deoxyheptonate aldolase, Trp-sensitive (aroH) (Salmonella typhi).